The sequence spans 135 residues: Putative pre-16S rRNA nuclease (135 aa).

Belongs to the YqgF nuclease family.

The protein resides in the cytoplasm. Its function is as follows. Could be a nuclease involved in processing of the 5'-end of pre-16S rRNA. This Buchnera aphidicola subsp. Acyrthosiphon pisum (strain 5A) protein is Putative pre-16S rRNA nuclease.